A 235-amino-acid chain; its full sequence is NADH-quinone oxidoreductase subunit B 2 (235 aa).

A compositionally biased stretch (low complexity) spans 1–14 (MGLTSRPTPASRQP). Positions 1–24 (MGLTSRPTPASRQPASPPPADPVL) are disordered. Cys-63, Cys-64, Cys-129, and Cys-159 together coordinate [4Fe-4S] cluster. The segment at 188-235 (TGATGGGPSTDALRSGLVAAPTAPGPTAPASTAPGPTAPAPTQDEERR) is disordered.

This sequence belongs to the complex I 20 kDa subunit family. NDH-1 is composed of 14 different subunits. Subunits NuoB, C, D, E, F, and G constitute the peripheral sector of the complex. Requires [4Fe-4S] cluster as cofactor.

The protein resides in the cell membrane. It carries out the reaction a quinone + NADH + 5 H(+)(in) = a quinol + NAD(+) + 4 H(+)(out). Its function is as follows. NDH-1 shuttles electrons from NADH, via FMN and iron-sulfur (Fe-S) centers, to quinones in the respiratory chain. The immediate electron acceptor for the enzyme in this species is believed to be a menaquinone. Couples the redox reaction to proton translocation (for every two electrons transferred, four hydrogen ions are translocated across the cytoplasmic membrane), and thus conserves the redox energy in a proton gradient. In Streptomyces griseus subsp. griseus (strain JCM 4626 / CBS 651.72 / NBRC 13350 / KCC S-0626 / ISP 5235), this protein is NADH-quinone oxidoreductase subunit B 2.